The following is a 58-amino-acid chain: Small ribosomal subunit protein bS21 (58 aa).

The tract at residues Arg-35–Lys-58 is disordered. Positions Val-43–Lys-58 are enriched in basic residues.

This sequence belongs to the bacterial ribosomal protein bS21 family.

In Acetivibrio thermocellus (strain ATCC 27405 / DSM 1237 / JCM 9322 / NBRC 103400 / NCIMB 10682 / NRRL B-4536 / VPI 7372) (Clostridium thermocellum), this protein is Small ribosomal subunit protein bS21.